A 777-amino-acid chain; its full sequence is Glucocorticoid receptor (777 aa).

A compositionally biased stretch (basic and acidic residues) spans 1–14; the sequence is MDSKESLTPGKEEN. The interval 1-21 is disordered; it reads MDSKESLTPGKEENPSSVLTQ. A modulating region spans residues 1-420; that stretch reads MDSKESLTPG…TATTGPPPKL (420 aa). At threonine 8 the chain carries Phosphothreonine. The residue at position 23 (arginine 23) is an Omega-N-methylarginine. Serine 45, serine 113, serine 134, and serine 141 each carry phosphoserine. Positions 130–182 are disordered; that stretch reads NRSTSVPENPKSSASSSVSAAPKEKEFPKTHSDVSSEQQNLKGQTGTNGGNVK. Over residues 134–150 the composition is skewed to low complexity; it reads SVPENPKSSASSSVSAA. The span at 151 to 163 shows a compositional bias: basic and acidic residues; that stretch reads PKEKEFPKTHSDV. Residues 164 to 174 show a composition bias toward polar residues; that stretch reads SSEQQNLKGQT. Phosphoserine is present on residues serine 203, serine 211, and serine 226. Lysine 258 is covalently cross-linked (Glycyl lysine isopeptide (Lys-Gly) (interchain with G-Cter in SUMO2)). The residue at position 267 (serine 267) is a Phosphoserine. Glycyl lysine isopeptide (Lys-Gly) (interchain with G-Cter in SUMO); alternate cross-links involve residues lysine 277 and lysine 293. Glycyl lysine isopeptide (Lys-Gly) (interchain with G-Cter in SUMO2); alternate cross-links involve residues lysine 277 and lysine 293. The span at 394 to 414 shows a compositional bias: low complexity; the sequence is SSPSMRPDVSSPPSSSSTATT. Residues 394–415 are disordered; it reads SSPSMRPDVSSPPSSSSTATTG. Serine 404 carries the phosphoserine modification. Lysine 419 participates in a covalent cross-link: Glycyl lysine isopeptide (Lys-Gly) (interchain with G-Cter in ubiquitin). 2 consecutive NR C4-type zinc fingers follow at residues 421 to 441 and 457 to 481; these read CLVCSDEASGCHYGVLTCGSC and CAGRNDCIIDKIRRKNCPACRYRKC. The nuclear receptor DNA-binding region spans 421–486; it reads CLVCSDEASG…RYRKCLQAGM (66 aa). N6-acetyllysine is present on residues lysine 480, lysine 492, lysine 494, and lysine 495. The segment at 485–777 is interaction with CLOCK; it reads GMNLEARKTK…NIKKLLFHQK (293 aa). The segment at 487–523 is hinge; the sequence is NLEARKTKKKIKGIQQATTGVSQETSENPANKTIVPA. Residues 524 to 758 form the NR LBD domain; sequence TLPQLTPTLV…FPEMLAEIIT (235 aa). The segment at 532-697 is interaction with CRY1; it reads LVSLLEVIEP…EIRMTYIKEL (166 aa). Residue lysine 703 forms a Glycyl lysine isopeptide (Lys-Gly) (interchain with G-Cter in SUMO) linkage.

It belongs to the nuclear hormone receptor family. NR3 subfamily. As to quaternary structure, heteromultimeric cytoplasmic complex with HSP90AA1, HSPA1A/HSPA1B, and FKBP5 or another immunophilin such as PPID, STIP1, or the immunophilin homolog PPP5C. Upon ligand binding FKBP5 dissociates from the complex and FKBP4 takes its place, thereby linking the complex to dynein and mediating transport to the nucleus, where the complex dissociates. Probably forms a complex composed of chaperones HSP90 and HSP70, co-chaperones CDC37, PPP5C, TSC1 and client protein TSC2, CDK4, AKT, RAF1 and NR3C1; this complex does not contain co-chaperones STIP1/HOP and PTGES3/p23. Directly interacts with UNC45A. Binds to DNA as a homodimer, and as heterodimer with NR3C2 or the retinoid X receptor. Binds STAT5A and STAT5B homodimers and heterodimers. Interacts with NRIP1, POU2F1, POU2F2 and TRIM28. Interacts with several coactivator complexes, including the SMARCA4 complex, CREBBP/EP300, TADA2L (Ada complex) and p160 coactivators such as NCOA2 and NCOA6. Interaction with BAG1 inhibits transactivation. Interacts with HEXIM1 and TGFB1I1. Interacts with NCOA1. Interacts with NCOA3, SMARCA4, SMARCC1, SMARCD1, and SMARCE1. Interacts with CLOCK, CRY1 and CRY2 in a ligand-dependent fashion. Interacts with CIART. Interacts with RWDD3. Interacts with UBE2I/UBC9 and this interaction is enhanced in the presence of RWDD3. Interacts with GRIP1. Interacts with NR4A3 (via nuclear receptor DNA-binding domain), represses transcription activity of NR4A3 on the POMC promoter Nur response element (NurRE). Directly interacts with PNRC2 to attract and form a complex with UPF1 and DCP1A; the interaction leads to rapid mRNA degradation. Interacts with GSK3B. Interacts with FNIP1 and FNIP2. Interacts (via C-terminus) with HNRNPU (via C-terminus). Interacts with MCM3AP. Interacts (via domain NR LBD) with HSP90AA1 and HSP90AB1. In the absence of hormonal ligand, interacts with TACC1. Interacts (via NR LBD domain) with ZNF764 (via KRAB domain); the interaction regulates transcription factor activity of NR3C1 by directing its actions toward certain biologic pathways. Post-translationally, acetylation by CLOCK reduces its binding to glucocorticoid response elements and its transcriptional activity. In terms of processing, increased proteasome-mediated degradation in response to glucocorticoids. Phosphorylated in the absence of hormone; becomes hyperphosphorylated in the presence of glucocorticoid. The Ser-203, Ser-226 and Ser-404-phosphorylated forms are mainly cytoplasmic, and the Ser-211-phosphorylated form is nuclear. Phosphorylation at Ser-211 increases transcriptional activity. Phosphorylation at Ser-203, Ser-226 and Ser-404 decreases signaling capacity. Phosphorylation at Ser-404 may protect from glucocorticoid-induced apoptosis. Phosphorylation at Ser-203 and Ser-211 is not required in regulation of chromosome segregation. May be dephosphorylated by PPP5C, attenuates NR3C1 action. Post-translationally, ubiquitinated by UBR5, leading to its degradation: UBR5 specifically recognizes and binds ligand-bound NR3C1 when it is not associated with coactivators (NCOAs). In presence of NCOAs, the UBR5-degron is not accessible, preventing its ubiquitination and degradation. In terms of processing, sumoylation at Lys-277 and Lys-293 negatively regulates its transcriptional activity. Sumoylation at Lys-703 positively regulates its transcriptional activity in the presence of RWDD3. Sumoylation at Lys-277 and Lys-293 is dispensable whereas sumoylation at Lys-703 is critical for the stimulatory effect of RWDD3 on its transcriptional activity. Heat shock increases sumoylation in a RWDD3-dependent manner. As to expression, within the infant and adult hippocampal formation, highest expression observed in the DG granule cell layer with moderate levels in the DG hilus, the CA2-CA4 pyramidal cell layer and the proximal part of the CA1 pyramidal cell layer. Moderate to high expression levels found in the presubiculum and in its' superficial layers. Weak but specific expression detected throughout the entire corticle mantle. In the amygdala, moderate levels were detected in the lateral, central and medial nuclei. Moderate expression levels were present in the PVNh alongside the third ventricle.

The protein resides in the cytoplasm. Its subcellular location is the nucleus. It localises to the mitochondrion. The protein localises to the cytoskeleton. It is found in the spindle. The protein resides in the microtubule organizing center. Its subcellular location is the centrosome. It localises to the chromosome. The protein localises to the nucleoplasm. Receptor for glucocorticoids (GC). Has a dual mode of action: as a transcription factor that binds to glucocorticoid response elements (GRE), both for nuclear and mitochondrial DNA, and as a modulator of other transcription factors. Affects inflammatory responses, cellular proliferation and differentiation in target tissues. Involved in chromatin remodeling. Plays a role in rapid mRNA degradation by binding to the 5' UTR of target mRNAs and interacting with PNRC2 in a ligand-dependent manner which recruits the RNA helicase UPF1 and the mRNA-decapping enzyme DCP1A, leading to RNA decay. Could act as a coactivator for STAT5-dependent transcription upon growth hormone (GH) stimulation and could reveal an essential role of hepatic GR in the control of body growth. Mediates glucocorticoid-induced apoptosis. Promotes accurate chromosome segregation during mitosis. May act as a tumor suppressor. May play a negative role in adipogenesis through the regulation of lipolytic and antilipogenic gene expression. The sequence is that of Glucocorticoid receptor (NR3C1) from Callithrix jacchus (White-tufted-ear marmoset).